The primary structure comprises 619 residues: Mitogen-activated protein kinase kinase kinase 2 (619 aa).

The disordered stretch occupies residues 25–45 (LSLQETRKAKSSSPKKQNDVR). Ser-26 carries the phosphoserine modification. In terms of domain architecture, PB1 spans 43 to 122 (DVRVKFEHRG…KSLKILLVIN (80 aa)). Phosphoserine is present on residues Ser-153, Ser-159, and Ser-164. Disordered regions lie at residues 154-173 (IIGP…IPDE), 201-248 (LDPL…QEFS), and 289-355 (RTQG…APTN). A compositionally biased stretch (low complexity) spans 203 to 219 (PLSLSSPENSGSGSCPS). Phosphoserine is present on residues Ser-239, Ser-297, Ser-311, Ser-331, Ser-344, and Ser-349. Over residues 290-299 (TQGTSLRSPV) the composition is skewed to polar residues. The span at 300-315 (SFSPTDHSLSTSSGSS) shows a compositional bias: low complexity. Residues 322–332 (DDSRIRRRGSD) are compositionally biased toward basic and acidic residues. A Protein kinase domain is found at 357–617 (RLGKLLGQGA…DELLRHMFVH (261 aa)). Residues 362 to 371 (LGQGAFGRVY) and Lys-385 each bind ATP. Catalysis depends on Asp-483, which acts as the Proton acceptor.

The protein belongs to the protein kinase superfamily. STE Ser/Thr protein kinase family. MAP kinase kinase kinase subfamily. Interacts with PKN2; the interaction activates PKN2 kinase activity in a MAP3K2-independent kinase activity. Self-associates. Binds both upstream activators and downstream substrates in multimolecular complexes. Interacts (via the kinase catalytic domain) with STK38. Interacts with XIAP/BIRC4. Mg(2+) is required as a cofactor. Autophosphorylated. In terms of processing, ubiquitination by XIAP/BIRC4 does not lead to proteasomal degradation.

The protein resides in the cytoplasm. It localises to the nucleus. It carries out the reaction L-seryl-[protein] + ATP = O-phospho-L-seryl-[protein] + ADP + H(+). The catalysed reaction is L-threonyl-[protein] + ATP = O-phospho-L-threonyl-[protein] + ADP + H(+). With respect to regulation, activated by phosphorylation on Thr-524. In terms of biological role, component of a protein kinase signal transduction cascade. Regulates the JNK and ERK5 pathways by phosphorylating and activating MAP2K5 and MAP2K7. Plays a role in caveolae kiss-and-run dynamics. This is Mitogen-activated protein kinase kinase kinase 2 (MAP3K2) from Homo sapiens (Human).